The sequence spans 1269 residues: Clustered mitochondria protein homolog (1269 aa).

Residues 297–552 (PSNNGDFMRT…NTNPVDIEFV (256 aa)) form the Clu domain. The segment covering 958–969 (EKKKEESKKAAA) has biased composition (basic and acidic residues). Residues 958–989 (EKKKEESKKAAADGEDAGSSGATSKEEEQAKE) form a disordered region. TPR repeat units lie at residues 1020-1053 (VSSY…SERC) and 1147-1180 (GQNE…FSKE). A disordered region spans residues 1211–1269 (LASAQQATKPANISQKKGKKSSSSSPALTNKSVDELLQFIEGPGASKSSKKSKKKHTKN). Polar residues predominate over residues 1213–1223 (SAQQATKPANI). Residues 1258 to 1269 (SSKKSKKKHTKN) show a composition bias toward basic residues.

This sequence belongs to the CLU family. In terms of assembly, may associate with the eukaryotic translation initiation factor 3 (eIF-3) complex.

It is found in the cytoplasm. MRNA-binding protein involved in proper cytoplasmic distribution of mitochondria. The chain is Clustered mitochondria protein homolog from Kluyveromyces lactis (strain ATCC 8585 / CBS 2359 / DSM 70799 / NBRC 1267 / NRRL Y-1140 / WM37) (Yeast).